Consider the following 338-residue polypeptide: NADPH dehydrogenase (338 aa).

22-25 lines the FMN pocket; the sequence is SPMC. A substrate-binding site is contributed by Y27. Positions 59 and 101 each coordinate FMN. 163 to 166 lines the substrate pocket; that stretch reads HAAH. Residues R214 and 306–307 each bind FMN; that span reads GR.

This sequence belongs to the NADH:flavin oxidoreductase/NADH oxidase family. NamA subfamily. As to quaternary structure, homotetramer. FMN is required as a cofactor.

The enzyme catalyses A + NADPH + H(+) = AH2 + NADP(+). In terms of biological role, catalyzes the reduction of the double bond of an array of alpha,beta-unsaturated aldehydes and ketones. It also reduces the nitro group of nitroester and nitroaromatic compounds. It could have a role in detoxification processes. The sequence is that of NADPH dehydrogenase from Listeria innocua serovar 6a (strain ATCC BAA-680 / CLIP 11262).